A 456-amino-acid polypeptide reads, in one-letter code: Vitamin K-dependent protein C (456 aa).

A signal peptide spans 1–20; that stretch reads MWQLASLSLLLTICGTCSTA. Positions 21–42 are excised as a propeptide; it reads APPGSVFSSSESAHQVLRIRKR. The region spanning 47 to 88 is the Gla domain; sequence LEEIRAGSLERECMEEICDFEEAKEIFQNVDDTLAYWSKYVD. A 4-carboxyglutamate mark is found at E48, E49, E56, E58, E61, E62, E67, E68, and E71. Residues C59 and C64 are joined by a disulfide bond. 4 disulfides stabilise this stretch: C92–C111, C101–C106, C105–C120, and C122–C131. EGF-like domains are found at residues 97 to 132 and 136 to 176; these read PEHA…RFCQ and SYIN…LQCQ. D113 bears the (3R)-3-hydroxyaspartate mark. N139 is a glycosylation site (N-linked (GlcNAc...) asparagine). Disulfide bonds link C140–C151, C147–C160, C162–C175, C183–C318, and C237–C253. The N-linked (GlcNAc...) asparagine glycan is linked to N202. The 235-residue stretch at 211–445 folds into the Peptidase S1 domain; that stretch reads LVNGKVTRRG…YLDWIHSHIR (235 aa). Catalysis depends on H252, which acts as the Charge relay system. N-linked (GlcNAc...) asparagine glycosylation is present at N289. The active-site Charge relay system is D298. Residue N350 is glycosylated (N-linked (GlcNAc...) asparagine). 2 disulfides stabilise this stretch: C368–C382 and C393–C421. Residue S397 is the Charge relay system of the active site.

It belongs to the peptidase S1 family. In terms of assembly, synthesized as a single chain precursor, which is cleaved into a light chain and a heavy chain held together by a disulfide bond. The enzyme is then activated by thrombin, which cleaves a tetradecapeptide from the amino end of the heavy chain; this reaction, which occurs at the surface of endothelial cells, is strongly promoted by thrombomodulin. The vitamin K-dependent, enzymatic carboxylation of some Glu residues allows the modified protein to bind calcium. Post-translationally, the iron and 2-oxoglutarate dependent 3-hydroxylation of aspartate and asparagine is (R) stereospecific within EGF domains. In terms of tissue distribution, plasma; synthesized in the liver.

It localises to the secreted. It is found in the golgi apparatus. The protein resides in the endoplasmic reticulum. It carries out the reaction Degradation of blood coagulation factors Va and VIIIa.. Its function is as follows. Protein C is a vitamin K-dependent serine protease that regulates blood coagulation by inactivating factors Va and VIIIa in the presence of calcium ions and phospholipids. Exerts a protective effect on the endothelial cell barrier function. This Canis lupus familiaris (Dog) protein is Vitamin K-dependent protein C (PROC).